The primary structure comprises 764 residues: FAST kinase domain-containing protein 5, mitochondrial (764 aa).

The N-terminal 27 residues, methionine 1–serine 27, are a transit peptide targeting the mitochondrion. Serine 95 is subject to Phosphoserine. At lysine 507 the chain carries N6-acetyllysine. The 61-residue stretch at leucine 697–glutamate 757 folds into the RAP domain.

This sequence belongs to the FAST kinase family. In terms of assembly, found in a complex with GRSF1, DDX28, DHX30 and FASTKD2. Associates with the 12S mitochondrial rRNA (12S mt-rRNA). In terms of tissue distribution, expression detected in spleen, thymus, testis, ovary, colon, heart, smooth muscle, kidney, brain, lung, liver and white adipose tissue with highest expression in heart, smooth muscle, liver and thyroid.

Its subcellular location is the mitochondrion matrix. It localises to the mitochondrion nucleoid. Plays an important role in the processing of non-canonical mitochondrial mRNA precursors. In Homo sapiens (Human), this protein is FAST kinase domain-containing protein 5, mitochondrial (FASTKD5).